The primary structure comprises 503 residues: Na(+)-translocating NADH-quinone reductase subunit B (503 aa).

A run of 5 helical transmembrane segments spans residues 55–75 (MMLVVIALFPATFLAIWNSGV), 94–114 (ISGFRSYLSFIFNDIGVFSIL), 120–140 (IFLPLLIISYSVGGVCEVLFA), 161–181 (TLPPTIPYWMAALGIAFGVVV), and 186–206 (FGGTGMNILNPALSGRAFLFF). The residue at position 248 (T248) is an FMN phosphoryl threonine. Transmembrane regions (helical) follow at residues 361-381 (TSTFACLLGAIFLVVTGIASW), 387-407 (FGIGAFITAWLFKIFSILIVG), 417-437 (FFIPAYRQLFLGGLGFGLVFM), 452-472 (WIYGLFIGFMTIVIRLINPAY), and 475-495 (GVMLAILLGNVFAPLLDYFAV).

Belongs to the NqrB/RnfD family. Composed of six subunits; NqrA, NqrB, NqrC, NqrD, NqrE and NqrF. The cofactor is FMN.

The protein resides in the cell inner membrane. It carries out the reaction a ubiquinone + n Na(+)(in) + NADH + H(+) = a ubiquinol + n Na(+)(out) + NAD(+). In terms of biological role, NQR complex catalyzes the reduction of ubiquinone-1 to ubiquinol by two successive reactions, coupled with the transport of Na(+) ions from the cytoplasm to the periplasm. NqrA to NqrE are probably involved in the second step, the conversion of ubisemiquinone to ubiquinol. This chain is Na(+)-translocating NADH-quinone reductase subunit B, found in Chlamydia caviae (strain ATCC VR-813 / DSM 19441 / 03DC25 / GPIC) (Chlamydophila caviae).